The following is a 227-amino-acid chain: MEYGFKAAGLVFVVLLLQQAPVLIRATDADPLQDFCVADLNSEVTVNGHACKPASAAGDEFLFSSKIATGGDVNANPNGSNVTELDVAEWPGVNTLGVSMNRVDFAPGGTNPPHVHPRATEVGIVLRGELLVGIIGTLDTGNRYYSKVVRAGETFVIPRGLMHFQFNVGKTEATMVVSFNSQNPGIVFVPLTLFGSNPPIPTPVLVKALRVDAGVVELLKSKFTGGY.

Positions 1 to 29 (MEYGFKAAGLVFVVLLLQQAPVLIRATDA) are cleaved as a signal peptide. Cysteines 36 and 51 form a disulfide. Positions 65–217 (SKIATGGDVN…ALRVDAGVVE (153 aa)) constitute a Cupin type-1 domain. N-linked (GlcNAc...) asparagine glycosylation is found at Asn-78 and Asn-81. 4 residues coordinate Mn(2+): His-114, His-116, Glu-121, and His-163.

It belongs to the germin family. In terms of assembly, oligomer (believed to be a pentamer but probably hexamer).

Its subcellular location is the secreted. The protein localises to the extracellular space. It is found in the apoplast. May play a role in plant defense. Probably has no oxalate oxidase activity even if the active site is conserved. This is Germin-like protein 3-5 from Oryza sativa subsp. japonica (Rice).